Consider the following 243-residue polypeptide: Peptide deformylase, mitochondrial (243 aa).

A mitochondrion-targeting transit peptide spans 1-39 (MARLWGALSLWPLWAAVPWGGAAAVGVRACSSTAAPDGV). G71, P169, and G171 together coordinate substrate. Positions 165–175 (LVTFPEGCESV) are hydrophobic dimerization interface. Co(2+) is bound by residues C172 and H214. E215 is an active-site residue. Co(2+) is bound at residue H218.

This sequence belongs to the polypeptide deformylase family. In terms of assembly, homodimer. Co(2+) is required as a cofactor. Ubiquitous.

It is found in the mitochondrion. It catalyses the reaction N-terminal N-formyl-L-methionyl-[peptide] + H2O = N-terminal L-methionyl-[peptide] + formate. In terms of biological role, removes the formyl group from the N-terminal Met of newly synthesized proteins. The polypeptide is Peptide deformylase, mitochondrial (Homo sapiens (Human)).